The following is a 582-amino-acid chain: TBCC domain-containing protein 1 (582 aa).

The span at 140–153 shows a compositional bias: low complexity; that stretch reads EWPSPRSRSPSSSS. Residues 140–159 form a disordered region; sequence EWPSPRSRSPSSSSSERDAK. The C-CAP/cofactor C-like domain maps to 305–451; sequence PPGSRLVLMS…LWNQPLLFGV (147 aa). The span at 547-558 shows a compositional bias: low complexity; the sequence is SLLPPTITPSSS. The interval 547-582 is disordered; that stretch reads SLLPPTITPSSSAEHWSSNQNTLKEQTHEQPTGTVC. Residues 559–582 show a composition bias toward polar residues; it reads AEHWSSNQNTLKEQTHEQPTGTVC.

This sequence belongs to the TBCC family.

Its subcellular location is the cytoplasm. The protein resides in the cytoskeleton. It is found in the microtubule organizing center. The protein localises to the centrosome. It localises to the spindle pole. In terms of biological role, may play a role in the regulation of centrosome and Golgi apparatus positioning. The polypeptide is TBCC domain-containing protein 1 (tbccd1) (Danio rerio (Zebrafish)).